The primary structure comprises 268 residues: Basic endochitinase CHB4 (268 aa).

The signal sequence occupies residues 1-24 (MALTKLSLVLFLCFLGLYSETVKS). Residues 25–59 (QNCGCAPNLCCSQFGYCGSTDAYCGTGCRSGPCRS) enclose the Chitin-binding type-1 domain. Intrachain disulfides connect C27/C35, C29/C41, C34/C48, C52/C57, C92/C137, C150/C159, and C236/C268. The tract at residues 71–268 (SVGSIVTQAF…GVDPGPNLSC (198 aa)) is catalytic. The Proton donor role is filled by E132. A glycan (N-linked (GlcNAc...) asparagine) is linked at N265.

It belongs to the glycosyl hydrolase 19 family. Chitinase class I subfamily.

The protein localises to the secreted. Its subcellular location is the extracellular space. The catalysed reaction is Random endo-hydrolysis of N-acetyl-beta-D-glucosaminide (1-&gt;4)-beta-linkages in chitin and chitodextrins.. Functionally, defense against chitin-containing fungal pathogens. This chain is Basic endochitinase CHB4, found in Brassica napus (Rape).